Here is a 186-residue protein sequence, read N- to C-terminus: Tegument protein UL55 (186 aa).

This sequence belongs to the alphaherpesvirinae HHV-1 UL55 family.

The protein localises to the virion tegument. It localises to the host nucleus matrix. The sequence is that of Tegument protein UL55 from Homo sapiens (Human).